The sequence spans 622 residues: Threonine--tRNA ligase (622 aa).

The segment at 1-141 (MKTLLIHSDY…SRKITTERKE (141 aa)) is editing domain. A catalytic region spans residues 199-498 (PHVKYIKEKE…TLENRPPALP (300 aa)). Zn(2+) is bound by residues cysteine 291, histidine 343, and histidine 467.

The protein belongs to the class-II aminoacyl-tRNA synthetase family. In terms of assembly, homodimer. It depends on Zn(2+) as a cofactor.

The protein resides in the cytoplasm. The catalysed reaction is tRNA(Thr) + L-threonine + ATP = L-threonyl-tRNA(Thr) + AMP + diphosphate + H(+). Its function is as follows. Catalyzes the attachment of threonine to tRNA(Thr) in a two-step reaction: L-threonine is first activated by ATP to form Thr-AMP and then transferred to the acceptor end of tRNA(Thr). Also edits incorrectly charged L-seryl-tRNA(Thr). This is Threonine--tRNA ligase from Methanococcus maripaludis (strain C6 / ATCC BAA-1332).